The following is a 398-amino-acid chain: Acetate kinase (398 aa).

Asn8 is a Mg(2+) binding site. An ATP-binding site is contributed by Lys15. Arg90 is a substrate binding site. Residue Asp147 is the Proton donor/acceptor of the active site. Residues 207 to 211 (HIGAG), 282 to 284 (DMR), and 330 to 334 (GVGEN) each bind ATP. Glu383 lines the Mg(2+) pocket.

This sequence belongs to the acetokinase family. As to quaternary structure, homodimer. Mg(2+) serves as cofactor. The cofactor is Mn(2+).

The protein resides in the cytoplasm. The enzyme catalyses acetate + ATP = acetyl phosphate + ADP. It functions in the pathway metabolic intermediate biosynthesis; acetyl-CoA biosynthesis; acetyl-CoA from acetate: step 1/2. Its function is as follows. Catalyzes the formation of acetyl phosphate from acetate and ATP. Can also catalyze the reverse reaction. This is Acetate kinase from Limosilactobacillus fermentum (strain NBRC 3956 / LMG 18251) (Lactobacillus fermentum).